Here is a 394-residue protein sequence, read N- to C-terminus: Metal tolerance protein 11 (394 aa).

Residues 1 to 103 (MVEPASPDSD…EQDNLAKSET (103 aa)) are Cytoplasmic-facing. Residues 104-124 (LAIRISNIANMLLFAAKVYAS) traverse the membrane as a helical segment. Over 125–130 (VTSGSL) the chain is Vacuolar. The chain crosses the membrane as a helical span at residues 131-151 (AIIASTLDSLLDLLSGFILWF). Over 152 to 172 (TAFSMQTPNPYQYPIGKKRMQ) the chain is Cytoplasmic. The helical transmembrane segment at 173-193 (PLGILVFASVMATLGLQIILE) threads the bilayer. Topologically, residues 194 to 212 (SLRTMLSSHKEFNLTKEQE) are vacuolar. Residues 213-233 (SWVVGIMLSVTLVKLLLVLYC) traverse the membrane as a helical segment. Topologically, residues 234–251 (RSFTNEIVKAYAQDHFFD) are cytoplasmic. The helical transmembrane segment at 252–272 (VITNIIGLIAVILANYIDYWI) threads the bilayer. Residue aspartate 273 is a topological domain, vacuolar. The chain crosses the membrane as a helical span at residues 274 to 294 (PVGAIILALYTIRTWSMTVLE). The Cytoplasmic portion of the chain corresponds to 295-394 (NVNSLVGKSA…HKPEHARSHC (100 aa)).

Belongs to the cation diffusion facilitator (CDF) transporter (TC 2.A.4) family. SLC30A subfamily. Widely expressed.

The protein localises to the prevacuolar compartment membrane. The protein resides in the golgi apparatus membrane. Cation/proton antiporter involved in endogenous manganese tolerance probably through vesicular trafficking and exocytosis. The sequence is that of Metal tolerance protein 11 (MTP11) from Arabidopsis thaliana (Mouse-ear cress).